The following is a 535-amino-acid chain: MKYVIVSGGVISGVGKGIVSSSIGALLKSRGHVVTHFKIDPYLNYNAGRMHPYEHGEVYVLDDGHECDMDFGNYERFNGIKLSGANSIPGGRLLHDIVKCEREGSFLGKTLQINPHIIDEVIRRIRAVADTPVESFGGGQAAVPDVVVVELGGTVGEYESSIYTEALAKFQYVVGKANCAFVSVDYIVELETGEQKTKGIQMGCRNFRRFGLNYDIVICRGRREPNMETRRKISTSCWVKEENVLGLPNLESVYLAPMFLEKHGIVEALNRILGLDDKGMDRRMLDIFSMVGRRHRDGVRIGIVGKYAPEFDSYTSLVNALKFSGAHIGVNVEIVWINSESYSVCDFERCDGVVIPGGFGARGISGKIEAIRHARENGVPLLGICLGYQLSVIEMCRNILGMSDAFSEEFQPSGKNLVVRFISDENGVVDKRLRVGGYGVELRDGLVKKLYGGVETVRERHRHRFEVAQEKVRGLLQHGVRFVGFSSGGKKINVFEVESHPFFVGVQFHPEFNARPDRPHPLITGLVSASYERSK.

The Glutamine amidotransferase type-1 domain maps to 300–535; it reads RIGIVGKYAP…LVSASYERSK (236 aa). Active-site for GATase activity residues include C385, H509, and E511.

This sequence belongs to the CTP synthase family.

It catalyses the reaction UTP + L-glutamine + ATP + H2O = CTP + L-glutamate + ADP + phosphate + 2 H(+). Its pathway is pyrimidine metabolism; CTP biosynthesis via de novo pathway; CTP from UDP: step 2/2. Functionally, catalyzes the ATP-dependent amination of UTP to CTP with either L-glutamine or ammonia as the source of nitrogen. In Encephalitozoon cuniculi (strain GB-M1) (Microsporidian parasite), this protein is CTP synthase.